Reading from the N-terminus, the 189-residue chain is Segregation and condensation protein B (189 aa).

The protein belongs to the ScpB family. In terms of assembly, homodimer. Homodimerization may be required to stabilize the binding of ScpA to the Smc head domains. Component of a cohesin-like complex composed of ScpA, ScpB and the Smc homodimer, in which ScpA and ScpB bind to the head domain of Smc. The presence of the three proteins is required for the association of the complex with DNA.

Its subcellular location is the cytoplasm. Its function is as follows. Participates in chromosomal partition during cell division. May act via the formation of a condensin-like complex containing Smc and ScpA that pull DNA away from mid-cell into both cell halves. The chain is Segregation and condensation protein B from Clostridium tetani (strain Massachusetts / E88).